Consider the following 282-residue polypeptide: MDGAKAEVFSVSVDTKMGAFKNSLLLLTLLLAIHLEASKIVYKKPLYGNSNIIKDKRIKTKPVKLETSTMSSTGVASSSTTAEEDWPTAVEFVIMTTPASELEASTETIGNNGTTETTVGEAPIIGSSEGSTRSMEPTTASPLMSTNPSSSSSLVSTIPLPPTAGLPVQDNQPVPCTCGVFLSSQIPNGLPTKPLIHQELDHMFPCNAIGRKQCQTKCLETIVQHLPNSANIVCSALGHDCHKERAYLFIKNCHNQWVNTNLQAGREYCCRSGVPYRCPLMG.

The tract at residues 103 to 156 (EASTETIGNNGTTETTVGEAPIIGSSEGSTRSMEPTTASPLMSTNPSSSSSLVS) is disordered. The span at 106-118 (TETIGNNGTTETT) shows a compositional bias: low complexity. The span at 128-140 (SEGSTRSMEPTTA) shows a compositional bias: polar residues. Residues 141–156 (SPLMSTNPSSSSSLVS) are compositionally biased toward low complexity.

As to expression, expressed in follicle cells during vitelline membrane formation.

This Drosophila melanogaster (Fruit fly) protein is Follicle cell protein 3C-1 (Fcp3C).